The sequence spans 127 residues: Fluoride-specific ion channel FluC (127 aa).

4 consecutive transmembrane segments (helical) span residues 4–24 (LLLA…LLSM), 35–55 (LGTL…FAWF), 71–91 (TGFC…VFLL), and 103–123 (VFVN…LFSA). 2 residues coordinate Na(+): Gly75 and Thr78.

Belongs to the fluoride channel Fluc/FEX (TC 1.A.43) family.

It localises to the cell inner membrane. It catalyses the reaction fluoride(in) = fluoride(out). Na(+) is not transported, but it plays an essential structural role and its presence is essential for fluoride channel function. In terms of biological role, fluoride-specific ion channel. Important for reducing fluoride concentration in the cell, thus reducing its toxicity. This chain is Fluoride-specific ion channel FluC, found in Escherichia coli O81 (strain ED1a).